The following is a 109-amino-acid chain: U4-lycotoxin-Ls1a (109 aa).

An N-terminal signal peptide occupies residues 1 to 22; it reads MKVLVLFSVLFLTLFSYSSTEA. Positions 23–44 are excised as a propeptide; that stretch reads IDEFDSDAEDDMLSLMANEQVR. The knottin domain stretch occupies residues 45-88; it reads AKACTPRLHDCSHDRHSCCRGELFKDVCYCFYPEGEDKTEVCSC. Cystine bridges form between cysteine 48/cysteine 63, cysteine 55/cysteine 72, cysteine 62/cysteine 88, and cysteine 74/cysteine 86. The segment at 89 to 108 is linear cationic cytotoxin domain; it reads QQPKSHKYIEKVVDKAKTVV.

The protein belongs to the neurotoxin 19 (CSTX) family. 05 (U4-Lctx) subfamily. In terms of tissue distribution, expressed by the venom gland.

It is found in the secreted. Functionally, enhances the high-affinity desensitization of human P2RX3 purinoceptors. The protein is U4-lycotoxin-Ls1a of Lycosa singoriensis (Wolf spider).